We begin with the raw amino-acid sequence, 229 residues long: Glutathione S-transferase 1 (229 aa).

The region spanning 2-86 (AQFTLWSHAH…YLADKYDTER (85 aa)) is the GST N-terminal domain. Residues 93-229 (DHPEYYKVIQ…FEERSKALDN (137 aa)) enclose the GST C-terminal domain.

The protein belongs to the GST superfamily.

It catalyses the reaction RX + glutathione = an S-substituted glutathione + a halide anion + H(+). Involved in the oxidative stress response and detoxification. This Schizosaccharomyces pombe (strain 972 / ATCC 24843) (Fission yeast) protein is Glutathione S-transferase 1 (gst1).